We begin with the raw amino-acid sequence, 158 residues long: MIRIGHGFDVHKFGGEGPVIIGGVAVPYEQGLIAHSDGDVALHALSDALLGAIAAGDIGRHFPDTDDKWKGADSRELLKDVYRRVKEQGYKLGNADVTIIAQAPKMAPYIDAMREAIAHDLETDIRNINVKATTTERLGFTGRKEGIATEAVVLLIKQ.

A divalent metal cation contacts are provided by D9 and H11. Residues 9-11 (DVH) and 35-36 (HS) contribute to the 4-CDP-2-C-methyl-D-erythritol 2-phosphate site. H43 provides a ligand contact to a divalent metal cation. 4-CDP-2-C-methyl-D-erythritol 2-phosphate contacts are provided by residues 57-59 (DIG), 62-66 (FPDTD), 101-107 (AQAPKMA), 133-136 (TTTE), F140, and R143.

This sequence belongs to the IspF family. Homotrimer. Requires a divalent metal cation as cofactor.

The catalysed reaction is 4-CDP-2-C-methyl-D-erythritol 2-phosphate = 2-C-methyl-D-erythritol 2,4-cyclic diphosphate + CMP. It participates in isoprenoid biosynthesis; isopentenyl diphosphate biosynthesis via DXP pathway; isopentenyl diphosphate from 1-deoxy-D-xylulose 5-phosphate: step 4/6. Functionally, involved in the biosynthesis of isopentenyl diphosphate (IPP) and dimethylallyl diphosphate (DMAPP), two major building blocks of isoprenoid compounds. Catalyzes the conversion of 4-diphosphocytidyl-2-C-methyl-D-erythritol 2-phosphate (CDP-ME2P) to 2-C-methyl-D-erythritol 2,4-cyclodiphosphate (ME-CPP) with a corresponding release of cytidine 5-monophosphate (CMP). This chain is 2-C-methyl-D-erythritol 2,4-cyclodiphosphate synthase, found in Vibrio vulnificus (strain YJ016).